Here is a 944-residue protein sequence, read N- to C-terminus: MAAVAAVAARRRRSWTGLVLACLGVCLGLTLAVDRSNFKTCEESSFCKRQRSIRPGQSPYRALLDSLQLGPDTLTIHLINEVTKVLLVLELQGLQKNMTRIRIDELEPRRPRYRVPDVLVAEPPTARLSVSGQDDNSVEVTVAEGPYKIILTARPFRLDLLEDRSLLLSVNARGLLNFEHQRAPRVSQGSKDPAEGDGAQPEEAPGDGDKPEEIQGKAEKDEPGAWEETFKTHSDSKPYGPTSVGLDFSLPGMEHVYGIPEHADSLRLKVTEGGDPYRLYNLDVFQYELYNPMALYGSVPVLLAHSPHRDLGIFWLNAAETWVDISSNTAGKTLFGKMLDYLQGSGETPQTDVRWMSESGIIDVFLLLGPSVFDVFRQYASLTGTQALPPLFSLGYHQSRWNYRDEADVLEVNQGFDDHNLPCDFIWLDIEHADGKRYFTWDPSRFPQPRTMLEHLASKRRKLVAIVDPHIKVDSSYRVHEELQNLGLYVKTRDGSDYEGWCWPGAASYPDFTNPKMRAWWADMFRFENYEGSSSNLYVWNDMNEPSVFNGPEVTMLKDAQHYGGWEHRDLHNIYGFYVHMATADGLVLRSGGVERPFVLSRAFFAGSQRFGAVWTGDNTAEWDHLKISIPMCLSLGLVGVSFCGADVGGFFKNPEPELLVRWYQMGAYQPFFRAHAHLDTGRREPWLLPTQYQDMIRDALGQRYSLLPFWYTLFYQAHREGVPVMRALWVHYPQDVTTFSIDDEFLLGDALLVHPVTDSEAHGVQVYLPGQGEVWYDVHSYQKYHGPQTLYLPVTLSSIPVFQRGGTIVPRWMRVRRSSDCMKDDPITLFVALSPQGTAQGELFLDDGHTFNYQTGHEFLLRRFSFSGNTLVSSSADSKGHFETPVWIERVVIIGAGKPATVVLQTKGSPESRLSFQHDPETSVLILRKPGVNVASDWSIHLR.

The signal sequence occupies residues 1–32; the sequence is MAAVAAVAARRRRSWTGLVLACLGVCLGLTLA. Cysteines 41 and 47 form a disulfide. Phosphoserine is present on Ser52. Asn97 carries N-linked (GlcNAc...) asparagine glycosylation. A disordered region spans residues 181-225; it reads QRAPRVSQGSKDPAEGDGAQPEEAPGDGDKPEEIQGKAEKDEPGA. Residues 207–225 show a composition bias toward basic and acidic residues; the sequence is DGDKPEEIQGKAEKDEPGA. Positions 283 and 429 each coordinate substrate. Asp542 functions as the Nucleophile in the catalytic mechanism. Arg602 is a binding site for substrate. Asp618 (proton donor) is an active-site residue. Cys633 and Cys644 are disulfide-bonded. His676 contributes to the substrate binding site.

It belongs to the glycosyl hydrolase 31 family. Heterodimer of a catalytic alpha subunit (GANAB) and a beta subunit (PRKCSH). Binds glycosylated PTPRC. Post-translationally, contains sialylated polysaccharide chains.

It is found in the endoplasmic reticulum. Its subcellular location is the golgi apparatus. The protein resides in the melanosome. The enzyme catalyses N(4)-(alpha-D-Glc-(1-&gt;3)-alpha-D-Man-(1-&gt;2)-alpha-D-Man-(1-&gt;2)-alpha-D-Man-(1-&gt;3)-[alpha-D-Man-(1-&gt;2)-alpha-D-Man-(1-&gt;3)-[alpha-D-Man-(1-&gt;2)-alpha-D-Man-(1-&gt;6)]-alpha-D-Man-(1-&gt;6)]-beta-D-Man-(1-&gt;4)-beta-D-GlcNAc-(1-&gt;4)-beta-D-GlcNAc)-L-asparaginyl-[protein] + H2O = N(4)-(alpha-D-Man-(1-&gt;2)-alpha-D-Man-(1-&gt;2)-alpha-D-Man-(1-&gt;3)-[alpha-D-Man-(1-&gt;2)-alpha-D-Man-(1-&gt;3)-[alpha-D-Man-(1-&gt;2)-alpha-D-Man-(1-&gt;6)]-alpha-D-Man-(1-&gt;6)]-beta-D-Man-(1-&gt;4)-beta-D-GlcNAc-(1-&gt;4)-beta-D-GlcNAc)-L-asparaginyl-[protein] (N-glucan mannose isomer 9A1,2,3B1,2,3) + beta-D-glucose. The catalysed reaction is N(4)-(alpha-D-Glc-(1-&gt;3)-alpha-D-Glc-(1-&gt;3)-alpha-D-Man-(1-&gt;2)-alpha-D-Man-(1-&gt;2)-alpha-D-Man-(1-&gt;3)-[alpha-D-Man-(1-&gt;2)-alpha-D-Man-(1-&gt;3)-[alpha-D-Man-(1-&gt;2)-alpha-D-Man-(1-&gt;6)]-alpha-D-Man-(1-&gt;6)]-beta-D-Man-(1-&gt;4)-beta-D-GlcNAc-(1-&gt;4)-beta-D-GlcNAc)-L-asparaginyl-[protein] + H2O = N(4)-(alpha-D-Glc-(1-&gt;3)-alpha-D-Man-(1-&gt;2)-alpha-D-Man-(1-&gt;2)-alpha-D-Man-(1-&gt;3)-[alpha-D-Man-(1-&gt;2)-alpha-D-Man-(1-&gt;3)-[alpha-D-Man-(1-&gt;2)-alpha-D-Man-(1-&gt;6)]-alpha-D-Man-(1-&gt;6)]-beta-D-Man-(1-&gt;4)-beta-D-GlcNAc-(1-&gt;4)-beta-D-GlcNAc)-L-asparaginyl-[protein] + beta-D-glucose. Its pathway is glycan metabolism; N-glycan metabolism. Functionally, catalytic subunit of glucosidase II that cleaves sequentially the 2 innermost alpha-1,3-linked glucose residues from the Glc(2)Man(9)GlcNAc(2) oligosaccharide precursor of immature glycoproteins. Required for PKD1/Polycystin-1 and PKD2/Polycystin-2 maturation and localization to the cell surface and cilia. The sequence is that of Neutral alpha-glucosidase AB (GANAB) from Sus scrofa (Pig).